We begin with the raw amino-acid sequence, 470 residues long: Monocarboxylate transporter 4 (470 aa).

Residues 1–17 (MGGAVVDEGPTGIKAPD) lie on the Cytoplasmic side of the membrane. A helical membrane pass occupies residues 18 to 38 (GGWGWAVLFGCFIITGFSYAF). Topologically, residues 39-61 (PKAVSVFFKELMHEFGIGYSDTA) are extracellular. Residues 62 to 82 (WISSILLAMLYGTGPLCSVCV) traverse the membrane as a helical segment. Residues 83–84 (NR) lie on the Cytoplasmic side of the membrane. A helical membrane pass occupies residues 85–105 (FGCRPVMLVGGLFASLGMVAA). The Extracellular segment spans residues 106 to 109 (SFCR). A helical membrane pass occupies residues 110-130 (SIIQIYLTTGVITGLGLALNF). Topologically, residues 131 to 149 (QPSLIMLNRYFNKRRPIAN) are cytoplasmic. A helical transmembrane segment spans residues 150 to 170 (GLAAAGSPVFLCALSPLGQLL). Topologically, residues 171-179 (QDHYGWRGG) are extracellular. The helical transmembrane segment at 180–200 (FLILGGLLLNCCVCAALMRPL) threads the bilayer. Residues 201 to 231 (VAPQVGGGTEPRGPQRPPQRLLDLSVFRDRG) lie on the Cytoplasmic side of the membrane. A helical transmembrane segment spans residues 232 to 252 (FLIYAVAASIMVLGLFVPPVF). At 253–267 (VVSYAKDMGVPDTKA) the chain is on the extracellular side. The chain crosses the membrane as a helical span at residues 268–288 (AFLLTILGFIDIFARPTAGFI). The Cytoplasmic portion of the chain corresponds to 289–298 (TGLKKVRPYS). The chain crosses the membrane as a helical span at residues 299–319 (VYLFSFAMFFNGFTDLTGSTA). At 320-321 (TD) the chain is on the extracellular side. The chain crosses the membrane as a helical span at residues 322 to 342 (YGGLVVFCIFFGISYGMVGAL). Residues 343–355 (QFEVLMAIVGTQK) lie on the Cytoplasmic side of the membrane. The helical transmembrane segment at 356-376 (FSSAIGLVLLLEAVAVLIGPP) threads the bilayer. Residues 377–391 (SGGKLLDATKVYKYV) lie on the Extracellular side of the membrane. Residues 392-412 (FILAGAEVLTSSLVLLLGNFF) traverse the membrane as a helical segment. Over 413 to 470 (CIGKRKRPEVTEPEEVASEEKLHKPPVDVGVDSREVEHFLKAEPEKNGEVVHTPETSV) the chain is Cytoplasmic. 2 basolateral sorting signal regions span residues 429–446 (ASEEKLHKPPVDVGVDSR) and 446–470 (REVEHFLKAEPEKNGEVVHTPETSV). At Ser430 the chain carries Phosphoserine. Thr465 is subject to Phosphothreonine. Residue Ser469 is modified to Phosphoserine.

The protein belongs to the major facilitator superfamily. Monocarboxylate porter (TC 2.A.1.13) family. As to quaternary structure, interacts with BSG; interaction mediates SLC16A3 targeting to the plasma membrane.

Its subcellular location is the cell membrane. It is found in the basolateral cell membrane. The catalysed reaction is (S)-lactate(in) + H(+)(in) = (S)-lactate(out) + H(+)(out). It catalyses the reaction pyruvate(out) + H(+)(out) = pyruvate(in) + H(+)(in). Functionally, proton-dependent transporter of monocarboxylates such as L-lactate and pyruvate. Plays a predominant role in the L-lactate efflux from highly glycolytic cells. The sequence is that of Monocarboxylate transporter 4 (Slc16a3) from Mus musculus (Mouse).